The primary structure comprises 160 residues: Large ribosomal subunit protein uL13 (160 aa).

It belongs to the universal ribosomal protein uL13 family. As to quaternary structure, part of the 50S ribosomal subunit.

In terms of biological role, this protein is one of the early assembly proteins of the 50S ribosomal subunit, although it is not seen to bind rRNA by itself. It is important during the early stages of 50S assembly. The polypeptide is Large ribosomal subunit protein uL13 (Orientia tsutsugamushi (strain Ikeda) (Rickettsia tsutsugamushi)).